Consider the following 444-residue polypeptide: NAD-capped RNA hydrolase NUDT12 (444 aa).

ANK repeat units follow at residues 11-40 (EIIS…SLLN) and 60-80 (SRQT…ANLL). Position 167 is an N6-succinyllysine (K167). Residues C266 and C269 each contribute to the Zn(2+) site. K274 is subject to N6-succinyllysine. The Zn(2+) site is built by C284 and C289. Substrate is bound by residues Y300, 336–338 (AGF), E352, E356, and E397. The 135-residue stretch at 301–435 (PRVDPVVIMQ…SRAIAHQLIK (135 aa)) folds into the Nudix hydrolase domain. The Mg(2+) site is built by A336, E352, E356, and E397. The short motif at 337 to 358 (GFIEPGETIEDAVRREVEEESG) is the Nudix box element. The short motif at 442 to 444 (PNL) is the Microbody targeting signal element.

The protein belongs to the Nudix hydrolase family. NudC subfamily. As to quaternary structure, homodimer. Homodimerization is essential for its catalytic activity and protein stability. Interacts (via ANK repeats) with BLMH. Mg(2+) is required as a cofactor. The cofactor is Zn(2+).

Its subcellular location is the cytoplasm. The protein localises to the peroxisome. It is found in the cytoplasmic granule. It catalyses the reaction a 5'-end NAD(+)-phospho-ribonucleoside in mRNA + H2O = a 5'-end phospho-adenosine-phospho-ribonucleoside in mRNA + beta-nicotinamide D-ribonucleotide + 2 H(+). The enzyme catalyses NAD(+) + H2O = beta-nicotinamide D-ribonucleotide + AMP + 2 H(+). It carries out the reaction NADH + H2O = reduced beta-nicotinamide D-ribonucleotide + AMP + 2 H(+). The catalysed reaction is NADPH + H2O = reduced beta-nicotinamide D-ribonucleotide + adenosine 2',5'-bisphosphate + 2 H(+). In terms of biological role, mRNA decapping enzyme that specifically removes the nicotinamide adenine dinucleotide (NAD) cap from a subset of mRNAs by hydrolyzing the diphosphate linkage to produce nicotinamide mononucleotide (NMN) and 5' monophosphate mRNA. The NAD-cap is present at the 5'-end of some RNAs; in contrast to the canonical N7 methylguanosine (m7G) cap, the NAD cap promotes mRNA decay. Preferentially acts on NAD-capped transcripts in response to nutrient stress. Also acts on free nicotinamide adenine dinucleotide molecules: hydrolyzes NAD(H) into NMN(H) and AMP, and NADPH into NMNH and 2',5'-ADP. May act to regulate the concentration of peroxisomal nicotinamide nucleotide cofactors required for oxidative metabolism in this organelle. Regulates the levels of circadian clock components PER1, PER2, PER3 and CRY2 in the liver. The chain is NAD-capped RNA hydrolase NUDT12 from Bos taurus (Bovine).